A 688-amino-acid chain; its full sequence is Elongation factor G (688 aa).

The 275-residue stretch at 8–282 (EKTRNIGIIA…AIVDYLPAPC (275 aa)) folds into the tr-type G domain. GTP-binding positions include 17–24 (AHIDAGKT), 81–85 (DTPGH), and 135–138 (NKMD).

It belongs to the TRAFAC class translation factor GTPase superfamily. Classic translation factor GTPase family. EF-G/EF-2 subfamily.

The protein resides in the cytoplasm. In terms of biological role, catalyzes the GTP-dependent ribosomal translocation step during translation elongation. During this step, the ribosome changes from the pre-translocational (PRE) to the post-translocational (POST) state as the newly formed A-site-bound peptidyl-tRNA and P-site-bound deacylated tRNA move to the P and E sites, respectively. Catalyzes the coordinated movement of the two tRNA molecules, the mRNA and conformational changes in the ribosome. In Onion yellows phytoplasma (strain OY-M), this protein is Elongation factor G.